We begin with the raw amino-acid sequence, 81 residues long: MNPIISAASVIAAGFAVGLASIGPGIGQGTAAGRAVEGIARQPEAEGKIRGTLLLSLAFMEALTIYGLVVALALLFANPFI.

A run of 2 helical transmembrane segments spans residues 3–23 (PIIS…ASIG) and 57–77 (LAFM…LLFA).

It belongs to the ATPase C chain family. As to quaternary structure, F-type ATPases have 2 components, F(1) - the catalytic core - and F(0) - the membrane proton channel. F(1) has five subunits: alpha(3), beta(3), gamma(1), delta(1), epsilon(1). F(0) has four main subunits: a(1), b(1), b'(1) and c(10-14). The alpha and beta chains form an alternating ring which encloses part of the gamma chain. F(1) is attached to F(0) by a central stalk formed by the gamma and epsilon chains, while a peripheral stalk is formed by the delta, b and b' chains.

It localises to the plastid membrane. F(1)F(0) ATP synthase produces ATP from ADP in the presence of a proton or sodium gradient. F-type ATPases consist of two structural domains, F(1) containing the extramembraneous catalytic core and F(0) containing the membrane proton channel, linked together by a central stalk and a peripheral stalk. During catalysis, ATP synthesis in the catalytic domain of F(1) is coupled via a rotary mechanism of the central stalk subunits to proton translocation. Its function is as follows. Key component of the F(0) channel; it plays a direct role in translocation across the membrane. A homomeric c-ring of between 10-14 subunits forms the central stalk rotor element with the F(1) delta and epsilon subunits. This chain is ATP synthase subunit C, plastid, found in Cuscuta gronovii (Common dodder).